Consider the following 510-residue polypeptide: ATP synthase subunit alpha (510 aa).

169–176 (GDRQTGKT) provides a ligand contact to ATP.

This sequence belongs to the ATPase alpha/beta chains family. In terms of assembly, F-type ATPases have 2 components, CF(1) - the catalytic core - and CF(0) - the membrane proton channel. CF(1) has five subunits: alpha(3), beta(3), gamma(1), delta(1), epsilon(1). CF(0) has three main subunits: a(1), b(2) and c(9-12). The alpha and beta chains form an alternating ring which encloses part of the gamma chain. CF(1) is attached to CF(0) by a central stalk formed by the gamma and epsilon chains, while a peripheral stalk is formed by the delta and b chains.

The protein localises to the cell membrane. The catalysed reaction is ATP + H2O + 4 H(+)(in) = ADP + phosphate + 5 H(+)(out). Functionally, produces ATP from ADP in the presence of a proton gradient across the membrane. The alpha chain is a regulatory subunit. This chain is ATP synthase subunit alpha, found in Buchnera aphidicola subsp. Schizaphis graminum (strain Sg).